Consider the following 487-residue polypeptide: Probable Xaa-Pro aminopeptidase AFUB_014460 (487 aa).

Positions 267, 278, 416, and 455 each coordinate Mn(2+).

It belongs to the peptidase M24B family. Requires Mn(2+) as cofactor.

The catalysed reaction is Release of any N-terminal amino acid, including proline, that is linked to proline, even from a dipeptide or tripeptide.. Functionally, catalyzes the removal of a penultimate prolyl residue from the N-termini of peptides. The chain is Probable Xaa-Pro aminopeptidase AFUB_014460 from Aspergillus fumigatus (strain CBS 144.89 / FGSC A1163 / CEA10) (Neosartorya fumigata).